Here is a 181-residue protein sequence, read N- to C-terminus: ADP-ribosylation factor 1-like 2 (181 aa).

G2 carries the N-myristoyl glycine lipid modification. The important for the stable binding to the membranes stretch occupies residues 3–16 (NVFGSLFKGLFGKK). GTP-binding positions include 24-32 (GLDAAGKTT), 126-129 (NKQD), and A160.

It belongs to the small GTPase superfamily. Arf family.

The protein resides in the golgi apparatus membrane. It carries out the reaction GTP + H2O = GDP + phosphate + H(+). Its activity is regulated as follows. Alternates between an inactive GDP-bound form and an active GTP-bound form. Activated by a guanine nucleotide-exchange factor (GEF) and inactivated by GTPase-activating protein (GAP). Functionally, small GTPase involved in protein trafficking between different compartments. Modulates vesicle budding and uncoating within the Golgi complex. In its GTP-bound form, triggers the recruitment of coatomer proteins to the Golgi membrane. The hydrolysis of ARF1-bound GTP, which is mediated by ARFGAPs proteins, is required for dissociation of coat proteins from Golgi membranes and vesicles. Involved in endoplasmic reticulum dynamics during embryogenesis. Also required for adult germline function. Plays a role in cell shedding during embryogenesis probably by promoting the endocytosis of cell adhesion molecules. During neurogenesis, involved in cell autonomous Q.p neuroblast asymmetric divisions that generate one precursor cell and one apoptotic cell, probably by controlling endocytosis. Plays a role in maintaining mitochondrial morphology. The protein is ADP-ribosylation factor 1-like 2 (arf-1.2) of Caenorhabditis briggsae.